The chain runs to 271 residues: Dirigent protein 17 (271 aa).

The span at 1-12 (MEDTGSIKQEAQ) shows a compositional bias: polar residues. A disordered region spans residues 1–22 (MEDTGSIKQEAQSHPPGIFEIP). Asparagine 255 carries an N-linked (GlcNAc...) asparagine glycan.

It belongs to the plant dirigent protein family. In terms of assembly, homodimer.

The protein localises to the secreted. The protein resides in the extracellular space. Its subcellular location is the apoplast. Its function is as follows. Dirigent proteins impart stereoselectivity on the phenoxy radical-coupling reaction, yielding optically active lignans from two molecules of coniferyl alcohol in the biosynthesis of lignans, flavonolignans, and alkaloids and thus plays a central role in plant secondary metabolism. In Arabidopsis thaliana (Mouse-ear cress), this protein is Dirigent protein 17 (DIR17).